We begin with the raw amino-acid sequence, 65 residues long: MSDTCGNCDCADKTQCVKKGSSYTADIIETEKSIMTVVMDAPAAENDGKCKCGPSCSCTNCTCGH.

The protein belongs to the metallothionein superfamily. Type 15 family.

Metallothioneins have a high content of cysteine residues that bind various heavy metals. The polypeptide is Metallothionein-like protein type 3 (Carica papaya (Papaya)).